We begin with the raw amino-acid sequence, 202 residues long: Pyridoxal 5'-phosphate synthase subunit PdxT (202 aa).

Position 49-51 (49-51 (GES)) interacts with L-glutamine. Cysteine 81 serves as the catalytic Nucleophile. L-glutamine is bound by residues arginine 110 and 139–140 (IR). Active-site charge relay system residues include histidine 182 and glutamate 184.

It belongs to the glutaminase PdxT/SNO family. In terms of assembly, in the presence of PdxS, forms a dodecamer of heterodimers. Only shows activity in the heterodimer.

The catalysed reaction is aldehydo-D-ribose 5-phosphate + D-glyceraldehyde 3-phosphate + L-glutamine = pyridoxal 5'-phosphate + L-glutamate + phosphate + 3 H2O + H(+). It catalyses the reaction L-glutamine + H2O = L-glutamate + NH4(+). It participates in cofactor biosynthesis; pyridoxal 5'-phosphate biosynthesis. Catalyzes the hydrolysis of glutamine to glutamate and ammonia as part of the biosynthesis of pyridoxal 5'-phosphate. The resulting ammonia molecule is channeled to the active site of PdxS. This Rhodococcus jostii (strain RHA1) protein is Pyridoxal 5'-phosphate synthase subunit PdxT.